We begin with the raw amino-acid sequence, 267 residues long: Elsinochrome reductase 1 (267 aa).

Positions 26, 72, 99, and 132 each coordinate NADP(+). Ser-149 functions as the Proton donor in the catalytic mechanism. 4 residues coordinate NADP(+): Tyr-163, Lys-167, Ile-196, and Thr-198. Residue Tyr-163 is the Proton acceptor of the active site. Lys-167 (lowers pKa of active site Tyr) is an active-site residue.

It belongs to the short-chain dehydrogenases/reductases (SDR) family.

Functionally, reductase; part of the gene cluster that mediates the biosynthesis of elsinochromes, pigments consisting of at least four interconvertible tautomers (A, B, C and D) that have a core phenolic quinone to which various side chains are attached and which play an important role in fungal pathogenesis. The non-reducing polyketide synthase PKS1 was proposed to iteratively catalyze decarboxylation between acetyl-CoA and malonyl-CoA subunits for polyketide chain elongation. The released polyketide undergoes cyclization to form an aromatic ring, and proceeds via serial modification steps to produce the heptaketide back- bone of elsinochrome. As elsinochrome has a symmetrical structure, two identical heptaketides are fused to form a core 1,2-dihydrobenzo-perylene ring structure, which can then be successively modified to produce the various derivatives of elsinochrome. Some of these reactions may be cooperatively carried out, at least in part, by the products of RDT1, OXR1 and PKS1. PRF1, embedded within the elsinochrome cluster possibly functions to stabilize some of the biosynthetic enzymes required for elsinochrome production. As prefoldin is a hexamer containing 2 a and 4 b subunits, additional prefoldin subunits, whose coding genes may not immediately link to the elsinochrome biosynthetic gene cluster, are required to fulfill the chaperone function. In addition, no methyltransferase-coding gene exists within the biosynthetic gene cluster, even though elsinochrome has four methyl groups at positions C3, C7, C8 and C12. Apparently, the identified gene cluster does not contain the entire entourage of genes responsible for elsinochrome biosynthesis. Once elsinochrome is synthesized, it must be exported outside the fungal cells, which is probably accomplished by the ECT1 transporter, to avoid toxicity. The protein is Elsinochrome reductase 1 of Elsinoe fawcettii (Citrus scab fungus).